Reading from the N-terminus, the 544-residue chain is CTP synthase (544 aa).

The tract at residues 1–267 (MAKFVFITGG…AQRVLQILNL (267 aa)) is amidoligase domain. Serine 13 contacts CTP. Residue serine 13 coordinates UTP. Residue 14-19 (SIGKGI) participates in ATP binding. An L-glutamine-binding site is contributed by tyrosine 54. Aspartate 71 is a binding site for ATP. 2 residues coordinate Mg(2+): aspartate 71 and glutamate 141. CTP is bound by residues 148–150 (DIE), 188–193 (KTKPTQ), and lysine 224. UTP is bound by residues 188–193 (KTKPTQ) and lysine 224. A Glutamine amidotransferase type-1 domain is found at 292–534 (EIAIVGKYVR…IEAALRSRSR (243 aa)). An L-glutamine-binding site is contributed by glycine 354. The Nucleophile; for glutamine hydrolysis role is filled by cysteine 381. L-glutamine contacts are provided by residues 382 to 385 (LGMQ), glutamate 405, and arginine 462. Residues histidine 507 and glutamate 509 contribute to the active site.

It belongs to the CTP synthase family. In terms of assembly, homotetramer.

It carries out the reaction UTP + L-glutamine + ATP + H2O = CTP + L-glutamate + ADP + phosphate + 2 H(+). It catalyses the reaction L-glutamine + H2O = L-glutamate + NH4(+). The catalysed reaction is UTP + NH4(+) + ATP = CTP + ADP + phosphate + 2 H(+). Its pathway is pyrimidine metabolism; CTP biosynthesis via de novo pathway; CTP from UDP: step 2/2. Its activity is regulated as follows. Allosterically activated by GTP, when glutamine is the substrate; GTP has no effect on the reaction when ammonia is the substrate. The allosteric effector GTP functions by stabilizing the protein conformation that binds the tetrahedral intermediate(s) formed during glutamine hydrolysis. Inhibited by the product CTP, via allosteric rather than competitive inhibition. Functionally, catalyzes the ATP-dependent amination of UTP to CTP with either L-glutamine or ammonia as the source of nitrogen. Regulates intracellular CTP levels through interactions with the four ribonucleotide triphosphates. The sequence is that of CTP synthase from Synechococcus sp. (strain JA-3-3Ab) (Cyanobacteria bacterium Yellowstone A-Prime).